The following is a 205-amino-acid chain: Polyamine-modulated factor 1 (205 aa).

The disordered stretch occupies residues 1–30; that stretch reads MAEASSANLGSGCEEKRHEGSSSESVPPGT. The stretch at 141–193 forms a coiled coil; that stretch reads FLQQRDTLRRHVQKQEAENQQLADAVLAGRRQVEELQLQVQAQQQAWQALHRE.

In terms of assembly, component of the MIS12 complex composed of MIS12, DSN1, NSL1 and PMF1. Interacts with COPS7A. Interacts via its coiled-coil domain with the leucine-zipper domain of NFE2L2. The interaction with NFE2L2 is required for the transcriptional regulation of SSAT. As to expression, highest levels of expression in heart and skeletal muscle, with significant levels expressed in kidney and liver.

It is found in the nucleus. The protein resides in the chromosome. It localises to the centromere. The protein localises to the kinetochore. Part of the MIS12 complex which is required for normal chromosome alignment and segregation and kinetochore formation during mitosis. May act as a cotranscription partner of NFE2L2 involved in regulation of polyamine-induced transcription of SSAT. The chain is Polyamine-modulated factor 1 from Homo sapiens (Human).